The chain runs to 145 residues: Photosystem I reaction center subunit VI-1, chloroplastic (145 aa).

Residues 1–50 constitute a chloroplast transit peptide; sequence MASLATVAAVKPSAAIKGLGGSSLAGAKLSIKPSRLSFKPKSIRANGVVA. A helical transmembrane segment spans residues 102–118; the sequence is LLLKFLILGGGSLLTYV.

This sequence belongs to the psaH family.

It is found in the plastid. It localises to the chloroplast thylakoid membrane. In terms of biological role, possible role could be the docking of the LHC I antenna complex to the core complex. The sequence is that of Photosystem I reaction center subunit VI-1, chloroplastic (PSAH1) from Arabidopsis thaliana (Mouse-ear cress).